A 210-amino-acid polypeptide reads, in one-letter code: Neuroendocrine protein 7B2 (210 aa).

The N-terminal stretch at 1–24 (MTSRMAILSGLLFWLLLEWNPAFA) is a signal peptide. A disulfide bridge connects residues Cys-118 and Cys-128. Residues Ser-139 and Ser-203 each carry the phosphoserine modification.

This sequence belongs to the 7B2 family. In terms of assembly, interacts with PCSK2/PC2 early in the secretory pathway. Dissociation occurs at later stages. Post-translationally, proteolytically cleaved in the Golgi by a furin-like convertase to generate bioactive peptides. In terms of processing, sulfated on tyrosine residues.

It localises to the secreted. Functionally, acts as a molecular chaperone for PCSK2/PC2, preventing its premature activation in the regulated secretory pathway. Binds to inactive PCSK2 in the endoplasmic reticulum and facilitates its transport from there to later compartments of the secretory pathway where it is proteolytically matured and activated. Also required for cleavage of PCSK2 but does not appear to be involved in its folding. Plays a role in regulating pituitary hormone secretion. The C-terminal peptide inhibits PCSK2 in vitro. The protein is Neuroendocrine protein 7B2 (Scg5) of Rattus norvegicus (Rat).